Consider the following 337-residue polypeptide: Diacylglycerol O-acyltransferase 2-like protein 6 (337 aa).

The next 2 helical transmembrane spans lie at 22–42 (MPVY…FLVF) and 102–122 (YIIA…NFAT).

Belongs to the diacylglycerol acyltransferase family.

The protein resides in the endoplasmic reticulum membrane. It catalyses the reaction 1,2-di-(9Z-octadecenoyl)-sn-glycerol + (9Z)-octadecenoyl-CoA = 1,2,3-tri-(9Z-octadecenoyl)-glycerol + CoA. Its function is as follows. Diglyceride acyltransferase that uses fatty acyl-CoA as substrate. Particularly active with oleate as a substrate. Has no wax synthase activity to produce wax esters. In Bos taurus (Bovine), this protein is Diacylglycerol O-acyltransferase 2-like protein 6 (DGAT2L6).